We begin with the raw amino-acid sequence, 68 residues long: Small ribosomal subunit protein bS21 (68 aa).

The protein belongs to the bacterial ribosomal protein bS21 family.

The sequence is that of Small ribosomal subunit protein bS21 from Endomicrobium trichonymphae.